A 210-amino-acid polypeptide reads, in one-letter code: Na(+)-translocating NADH-quinone reductase subunit D (210 aa).

Helical transmembrane passes span 42 to 62, 66 to 86, 103 to 123, 131 to 151, 154 to 174, and 178 to 198; these read VVMTVAVLFVTAFSNFFISTI, IPNSVRIIVQMAIIASLVIVV, VYVGLIITNCIVMGRAEAFAM, FMDGVGNGLGYGVILILVGAF, LFGSGSLYGFVILPLTSNGGW, and NGLLLLAPSAFFIVGGIIWAV.

This sequence belongs to the NqrDE/RnfAE family. In terms of assembly, composed of six subunits; NqrA, NqrB, NqrC, NqrD, NqrE and NqrF.

It localises to the cell inner membrane. It catalyses the reaction a ubiquinone + n Na(+)(in) + NADH + H(+) = a ubiquinol + n Na(+)(out) + NAD(+). In terms of biological role, NQR complex catalyzes the reduction of ubiquinone-1 to ubiquinol by two successive reactions, coupled with the transport of Na(+) ions from the cytoplasm to the periplasm. NqrA to NqrE are probably involved in the second step, the conversion of ubisemiquinone to ubiquinol. This Psychromonas ingrahamii (strain DSM 17664 / CCUG 51855 / 37) protein is Na(+)-translocating NADH-quinone reductase subunit D.